The following is a 247-amino-acid chain: tRNA pseudouridine synthase A (247 aa).

D58 serves as the catalytic Nucleophile. Y116 is a substrate binding site.

The protein belongs to the tRNA pseudouridine synthase TruA family. As to quaternary structure, homodimer.

It catalyses the reaction uridine(38/39/40) in tRNA = pseudouridine(38/39/40) in tRNA. Formation of pseudouridine at positions 38, 39 and 40 in the anticodon stem and loop of transfer RNAs. The protein is tRNA pseudouridine synthase A of Hydrogenobaculum sp. (strain Y04AAS1).